The chain runs to 290 residues: Diaminopimelate epimerase (290 aa).

The substrate site is built by N11 and N78. C87 serves as the catalytic Proton donor. Substrate-binding positions include 88–89 (GN), N163, N199, and 217–218 (ER). C226 functions as the Proton acceptor in the catalytic mechanism. A substrate-binding site is contributed by 227–228 (GT).

It belongs to the diaminopimelate epimerase family. In terms of assembly, homodimer.

The protein localises to the cytoplasm. The enzyme catalyses (2S,6S)-2,6-diaminopimelate = meso-2,6-diaminopimelate. It functions in the pathway amino-acid biosynthesis; L-lysine biosynthesis via DAP pathway; DL-2,6-diaminopimelate from LL-2,6-diaminopimelate: step 1/1. Catalyzes the stereoinversion of LL-2,6-diaminopimelate (L,L-DAP) to meso-diaminopimelate (meso-DAP), a precursor of L-lysine and an essential component of the bacterial peptidoglycan. In Mycobacterium ulcerans (strain Agy99), this protein is Diaminopimelate epimerase.